Reading from the N-terminus, the 150-residue chain is Arginine repressor (150 aa).

This sequence belongs to the ArgR family.

The protein localises to the cytoplasm. It functions in the pathway amino-acid biosynthesis; L-arginine biosynthesis [regulation]. In terms of biological role, regulates arginine biosynthesis genes. The sequence is that of Arginine repressor from Psychromonas ingrahamii (strain DSM 17664 / CCUG 51855 / 37).